The sequence spans 85 residues: Large ribosomal subunit protein eL43 (85 aa).

Residues C32, C35, C50, and C53 each contribute to the Zn(2+) site. The segment at 32–53 adopts a C4-type zinc-finger fold; sequence CTFCGKTKMKRRAVGIWHCGSC.

It belongs to the eukaryotic ribosomal protein eL43 family. In terms of assembly, component of the large ribosomal subunit.

It is found in the cytoplasm. Functionally, component of the large ribosomal subunit. The ribosome is a large ribonucleoprotein complex responsible for the synthesis of proteins in the cell. This Myxine glutinosa (Atlantic hagfish) protein is Large ribosomal subunit protein eL43 (rpl37a).